A 95-amino-acid polypeptide reads, in one-letter code: MAIDAATVRKVARLARIAEPEEKLEPLAKELSGILNWIEQLNEVDTDGVEPMTTSVETTLPMRDDVVTEGGDPAKVLANAPKAAKNFFVVPKVVE.

It belongs to the GatC family. Heterotrimer of A, B and C subunits.

It carries out the reaction L-glutamyl-tRNA(Gln) + L-glutamine + ATP + H2O = L-glutaminyl-tRNA(Gln) + L-glutamate + ADP + phosphate + H(+). The enzyme catalyses L-aspartyl-tRNA(Asn) + L-glutamine + ATP + H2O = L-asparaginyl-tRNA(Asn) + L-glutamate + ADP + phosphate + 2 H(+). Its function is as follows. Allows the formation of correctly charged Asn-tRNA(Asn) or Gln-tRNA(Gln) through the transamidation of misacylated Asp-tRNA(Asn) or Glu-tRNA(Gln) in organisms which lack either or both of asparaginyl-tRNA or glutaminyl-tRNA synthetases. The reaction takes place in the presence of glutamine and ATP through an activated phospho-Asp-tRNA(Asn) or phospho-Glu-tRNA(Gln). In Phenylobacterium zucineum (strain HLK1), this protein is Aspartyl/glutamyl-tRNA(Asn/Gln) amidotransferase subunit C.